Reading from the N-terminus, the 72-residue chain is Prokaryotic ubiquitin-like protein Pup (72 aa).

Gly residues predominate over residues 1 to 10; sequence MATRDSGGGQ. The disordered stretch occupies residues 1-41; that stretch reads MATRDSGGGQQRADRRAEEIDDVATEDTSASDLKERHEKLS. The stretch at 27–61 forms a coiled coil; sequence DTSASDLKERHEKLSEDVDSLLDEIDDVLEENAEE. Residues 28–66 form an ARC ATPase binding region; sequence TSASDLKERHEKLSEDVDSLLDEIDDVLEENAEEFVKGY. The span at 32-41 shows a compositional bias: basic and acidic residues; the sequence is DLKERHEKLS. At Gln-72 the chain carries Deamidated glutamine. Gln-72 participates in a covalent cross-link: Isoglutamyl lysine isopeptide (Gln-Lys) (interchain with K-? in acceptor proteins).

This sequence belongs to the prokaryotic ubiquitin-like protein family. In terms of assembly, strongly interacts with the proteasome-associated ATPase ARC through a hydrophobic interface; the interacting region of Pup lies in its C-terminal half. There is one Pup binding site per ARC hexamer ring. Post-translationally, is modified by deamidation of its C-terminal glutamine to glutamate by the deamidase Dop, a prerequisite to the subsequent pupylation process.

Its pathway is protein degradation; proteasomal Pup-dependent pathway. Its function is as follows. Protein modifier that is covalently attached to lysine residues of substrate proteins, thereby targeting them for proteasomal degradation. The tagging system is termed pupylation. The sequence is that of Prokaryotic ubiquitin-like protein Pup from Frankia casuarinae (strain DSM 45818 / CECT 9043 / HFP020203 / CcI3).